Consider the following 222-residue polypeptide: Probable glutathione-independent glyoxalase hsp3104 (222 aa).

Residues Cys124, His125, and Glu155 contribute to the active site.

It belongs to the peptidase C56 family. HSP31-like subfamily.

The protein resides in the cytoplasm. It catalyses the reaction methylglyoxal + H2O = (R)-lactate + H(+). In terms of biological role, catalyzes the conversion of methylglyoxal (MG) to D-lactate in a single glutathione (GSH)-independent step. May play a role in detoxifying endogenously produced glyoxals. Involved in protection against reactive oxygen species (ROS). The chain is Probable glutathione-independent glyoxalase hsp3104 from Schizosaccharomyces pombe (strain 972 / ATCC 24843) (Fission yeast).